The chain runs to 193 residues: Ancillary SecYEG translocon subunit (193 aa).

The Cytoplasmic segment spans residues 1–11 (MIKNSYINEKL). The helical transmembrane segment at 12–34 (NFYQKSFLTCMLLIVIVIVYFFS) threads the bilayer. Residues 35–193 (KNYLDKPKNS…IIQMKINNYN (159 aa)) are Extracellular-facing.

Belongs to the YfgM family. Interacts with the Sec translocon. Forms a complex with PpiD.

The protein resides in the cell membrane. Functionally, may mediate protein transfer from the Sec translocon to the chaperone network via its extracellular C-terminal region. The polypeptide is Ancillary SecYEG translocon subunit (Buchnera aphidicola subsp. Baizongia pistaciae (strain Bp)).